Reading from the N-terminus, the 23-residue chain is Coenzyme PQQ synthesis protein A (23 aa).

A cross-link (pyrroloquinoline quinone (Glu-Tyr)) is located at residues 15 to 19 (EVTLY).

It belongs to the PqqA family.

It functions in the pathway cofactor biosynthesis; pyrroloquinoline quinone biosynthesis. Its function is as follows. Required for coenzyme pyrroloquinoline quinone (PQQ) biosynthesis. PQQ is probably formed by cross-linking a specific glutamate to a specific tyrosine residue and excising these residues from the peptide. The protein is Coenzyme PQQ synthesis protein A of Pseudomonas aeruginosa (strain UCBPP-PA14).